The following is a 775-amino-acid chain: pH-response regulator protein palF/RIM8 (775 aa).

Disordered regions lie at residues 217–304 (EPIS…NTPS), 531–550 (RRKS…EFQQ), 586–623 (PDQI…DEKA), 631–650 (TLLP…SAVE), and 697–775 (AGSS…RYQR). Low complexity predominate over residues 262–278 (APSNVSSSSRLSNSSQS). Positions 279–304 (FQIVTDPGSTASSGVRNSEARSNTPS) are enriched in polar residues. Positions 697–709 (AGSSSAPLTSPSR) are enriched in polar residues. 2 stretches are compositionally biased toward basic and acidic residues: residues 710-723 (PSEE…RQRL) and 733-743 (PDARHNDRADD).

The protein belongs to the arrestin family. PalF/RIM8 subfamily.

Required for the proteolytic cleavage of the transcription factor pacC in response to alkaline ambient pH. The chain is pH-response regulator protein palF/RIM8 (palF) from Emericella nidulans (strain FGSC A4 / ATCC 38163 / CBS 112.46 / NRRL 194 / M139) (Aspergillus nidulans).